An 827-amino-acid chain; its full sequence is Glycerol-3-phosphate acyltransferase (827 aa).

The HXXXXD motif signature appears at 325 to 330 (CHRSHM).

It belongs to the GPAT/DAPAT family.

The protein localises to the cell inner membrane. It carries out the reaction sn-glycerol 3-phosphate + an acyl-CoA = a 1-acyl-sn-glycero-3-phosphate + CoA. The protein operates within phospholipid metabolism; CDP-diacylglycerol biosynthesis; CDP-diacylglycerol from sn-glycerol 3-phosphate: step 1/3. The polypeptide is Glycerol-3-phosphate acyltransferase (Shigella dysenteriae serotype 1 (strain Sd197)).